Here is an 89-residue protein sequence, read N- to C-terminus: Small ribosomal subunit protein uS15 (89 aa).

It belongs to the universal ribosomal protein uS15 family. In terms of assembly, part of the 30S ribosomal subunit. Forms a bridge to the 50S subunit in the 70S ribosome, contacting the 23S rRNA.

One of the primary rRNA binding proteins, it binds directly to 16S rRNA where it helps nucleate assembly of the platform of the 30S subunit by binding and bridging several RNA helices of the 16S rRNA. In terms of biological role, forms an intersubunit bridge (bridge B4) with the 23S rRNA of the 50S subunit in the ribosome. This is Small ribosomal subunit protein uS15 from Chlamydia caviae (strain ATCC VR-813 / DSM 19441 / 03DC25 / GPIC) (Chlamydophila caviae).